A 214-amino-acid chain; its full sequence is MRVGIFGGTFDPIHVGHMIVAEQVMDELGMERVVFVPSGIPPHKEASSVRAPAEDRYEMVLAAIAGNERFSADRIEIDAGRPMHTVETVPLLKERLPGEEWFFITGADEVSNLLSWKDPDRLLEEVVMVAATRPGYDLSRLGHLEARLKNFDRIFPVECTRVDVSATGIRRRILQGKSIRYLVPEGVREIILSRGLYRADARRTRGELLKEERS.

This sequence belongs to the NadD family.

It catalyses the reaction nicotinate beta-D-ribonucleotide + ATP + H(+) = deamido-NAD(+) + diphosphate. It participates in cofactor biosynthesis; NAD(+) biosynthesis; deamido-NAD(+) from nicotinate D-ribonucleotide: step 1/1. Catalyzes the reversible adenylation of nicotinate mononucleotide (NaMN) to nicotinic acid adenine dinucleotide (NaAD). The chain is Probable nicotinate-nucleotide adenylyltransferase from Rubrobacter xylanophilus (strain DSM 9941 / JCM 11954 / NBRC 16129 / PRD-1).